Consider the following 198-residue polypeptide: Recombination protein RecR (198 aa).

The segment at 57 to 72 (CAMCNTFTESAVCETC) adopts a C4-type zinc-finger fold. The 96-residue stretch at 80–175 (ALLCVVETPG…KVSRLARGVP (96 aa)) folds into the Toprim domain.

Belongs to the RecR family.

May play a role in DNA repair. It seems to be involved in an RecBC-independent recombinational process of DNA repair. It may act with RecF and RecO. This chain is Recombination protein RecR, found in Herminiimonas arsenicoxydans.